The following is a 117-amino-acid chain: Immunoglobulin heavy variable 7-4-1 (117 aa).

The N-terminal stretch at 1–19 (MDWTWRILFLVAAATGAHS) is a signal peptide. Positions 20–44 (QVQLVQSGSELKKPGASVKVSCKAS) are framework-1. In terms of domain architecture, Ig-like spans 20 to 117 (QVQLVQSGSE…EDTAVYYCAR (98 aa)). Cys-41 and Cys-115 form a disulfide bridge. Residues 45 to 52 (GYTFTSYA) are complementarity-determining-1. Residues 53-69 (MNWVRQAPGQGLEWMGW) form a framework-2 region. A complementarity-determining-2 region spans residues 70–77 (INTNTGNP). The framework-3 stretch occupies residues 78–115 (TYAQGFTGRFVFSLDTSVSTAYLQICSLKAEDTAVYYC). Residues 116–117 (AR) form a complementarity-determining-3 region.

As to quaternary structure, immunoglobulins are composed of two identical heavy chains and two identical light chains; disulfide-linked.

The protein resides in the secreted. Its subcellular location is the cell membrane. V region of the variable domain of immunoglobulin heavy chains that participates in the antigen recognition. Immunoglobulins, also known as antibodies, are membrane-bound or secreted glycoproteins produced by B lymphocytes. In the recognition phase of humoral immunity, the membrane-bound immunoglobulins serve as receptors which, upon binding of a specific antigen, trigger the clonal expansion and differentiation of B lymphocytes into immunoglobulins-secreting plasma cells. Secreted immunoglobulins mediate the effector phase of humoral immunity, which results in the elimination of bound antigens. The antigen binding site is formed by the variable domain of one heavy chain, together with that of its associated light chain. Thus, each immunoglobulin has two antigen binding sites with remarkable affinity for a particular antigen. The variable domains are assembled by a process called V-(D)-J rearrangement and can then be subjected to somatic hypermutations which, after exposure to antigen and selection, allow affinity maturation for a particular antigen. The protein is Immunoglobulin heavy variable 7-4-1 of Homo sapiens (Human).